The following is a 331-amino-acid chain: 6-phosphogluconolactonase (331 aa).

Lys-287 is subject to N6-acetyllysine.

The protein belongs to the cycloisomerase 2 family.

The enzyme catalyses 6-phospho-D-glucono-1,5-lactone + H2O = 6-phospho-D-gluconate + H(+). Its pathway is carbohydrate degradation; pentose phosphate pathway; D-ribulose 5-phosphate from D-glucose 6-phosphate (oxidative stage): step 2/3. Its function is as follows. Catalyzes the hydrolysis of 6-phosphogluconolactone to 6-phosphogluconate. This chain is 6-phosphogluconolactonase, found in Escherichia coli O157:H7.